Here is a 640-residue protein sequence, read N- to C-terminus: 1,4-alpha-glucan branching enzyme GlgB (640 aa).

D318 serves as the catalytic Nucleophile. Residue E371 is the Proton donor of the active site.

This sequence belongs to the glycosyl hydrolase 13 family. GlgB subfamily. As to quaternary structure, monomer.

The enzyme catalyses Transfers a segment of a (1-&gt;4)-alpha-D-glucan chain to a primary hydroxy group in a similar glucan chain.. It functions in the pathway glycan biosynthesis; glycogen biosynthesis. Its function is as follows. Catalyzes the formation of the alpha-1,6-glucosidic linkages in glycogen by scission of a 1,4-alpha-linked oligosaccharide from growing alpha-1,4-glucan chains and the subsequent attachment of the oligosaccharide to the alpha-1,6 position. This is 1,4-alpha-glucan branching enzyme GlgB from Francisella philomiragia subsp. philomiragia (strain ATCC 25017 / CCUG 19701 / FSC 153 / O#319-036).